A 423-amino-acid polypeptide reads, in one-letter code: p-aminobenzoyl-glutamate hydrolase subunit A homolog (423 aa).

It belongs to the peptidase M20 family. The cofactor is Mn(2+).

Functionally, catalyzes the cleavage of p-aminobenzoyl-glutamate (PABA-GLU) to form p-aminobenzoate (PABA) and glutamate. In Haemophilus influenzae (strain ATCC 51907 / DSM 11121 / KW20 / Rd), this protein is p-aminobenzoyl-glutamate hydrolase subunit A homolog (abgA).